Consider the following 347-residue polypeptide: uncharacterized protein (347 aa).

The next 10 membrane-spanning stretches (helical) occupy residues 6-26 (GSAS…GFAT), 37-57 (FGWF…LLGA), 90-110 (FMLF…GALF), 114-134 (LGMS…IVMT), 140-160 (IFGV…IVVA), 182-202 (WLLS…AVLV), 217-237 (GALI…LSLS), 262-282 (LIYL…NLYG), 289-309 (SFLP…AYIT), and 317-337 (LIST…GALL).

It localises to the cell membrane. This is an uncharacterized protein from Bacillus subtilis (strain 168).